The sequence spans 501 residues: ADP,ATP carrier protein 3 (501 aa).

The next 12 membrane-spanning stretches (helical) occupy residues 23–43 (LKLF…FGAL), 59–79 (IISF…TILY), 90–110 (YIFY…AYII), 146–166 (YALM…LMFW), 183–203 (PVLG…LVFF), 227–247 (IMLQ…MFLF), 293–313 (IALL…PWKA), 326–346 (VNFM…FMII), 361–381 (LLTP…IIFI), 383–403 (EIGT…VGAI), 446–466 (FGKS…PTAT), and 470–490 (IIIY…WNII).

It belongs to the ADP/ATP translocase tlc family.

The protein resides in the cell membrane. Provides the rickettsial cell with host ATP in exchange for rickettsial ADP. This is an obligate exchange system. This energy acquiring activity is an important component of rickettsial parasitism. The chain is ADP,ATP carrier protein 3 (tlcC) from Rickettsia prowazekii (strain Madrid E).